The sequence spans 478 residues: Trigger factor (478 aa).

Residues 162 to 243 (GDFVSIDLSA…VKSIKERELP (82 aa)) enclose the PPIase FKBP-type domain. The tract at residues 424-478 (KDTDGNDIDTTEFFGPSGGAQAEAEGADEADADSDADSDTEADSDTEADEADEAK) is disordered. The span at 448–478 (EGADEADADSDADSDTEADSDTEADEADEAK) shows a compositional bias: acidic residues.

The protein belongs to the FKBP-type PPIase family. Tig subfamily.

The protein resides in the cytoplasm. The enzyme catalyses [protein]-peptidylproline (omega=180) = [protein]-peptidylproline (omega=0). Functionally, involved in protein export. Acts as a chaperone by maintaining the newly synthesized protein in an open conformation. Functions as a peptidyl-prolyl cis-trans isomerase. The polypeptide is Trigger factor (Mycobacterium sp. (strain KMS)).